We begin with the raw amino-acid sequence, 387 residues long: Alpha-maltose-1-phosphate synthase (387 aa).

The protein belongs to the glycosyltransferase group 1 family.

It carries out the reaction ADP-alpha-D-glucose + alpha-D-glucose 1-phosphate = alpha-maltose 1-phosphate + ADP + H(+). It participates in glycan biosynthesis; glycogen biosynthesis. In terms of biological role, involved in the biosynthesis of the maltose-1-phosphate (M1P) building block required for alpha-glucan production by the key enzyme GlgE. Catalyzes the formation of an alpha-1,4 linkage between glucose from ADP-glucose and glucose 1-phosphate (G1P) to yield maltose-1-phosphate (M1P). This Mycolicibacterium smegmatis (strain ATCC 700084 / mc(2)155) (Mycobacterium smegmatis) protein is Alpha-maltose-1-phosphate synthase.